Consider the following 292-residue polypeptide: Putative FNIP repeat-containing protein L281 (292 aa).

One copy of the FNIP repeat lies at phenylalanine 95–serine 134.

This is Putative FNIP repeat-containing protein L281 from Acanthamoeba polyphaga mimivirus (APMV).